Consider the following 437-residue polypeptide: Amino-acid acetyltransferase (437 aa).

The N-acetyltransferase domain maps to 289 to 429; that stretch reads ENIRLATSFD…EHYNYQRMSK (141 aa).

This sequence belongs to the acetyltransferase family. ArgA subfamily.

Its subcellular location is the cytoplasm. It catalyses the reaction L-glutamate + acetyl-CoA = N-acetyl-L-glutamate + CoA + H(+). It functions in the pathway amino-acid biosynthesis; L-arginine biosynthesis; N(2)-acetyl-L-ornithine from L-glutamate: step 1/4. The sequence is that of Amino-acid acetyltransferase from Actinobacillus pleuropneumoniae serotype 5b (strain L20).